We begin with the raw amino-acid sequence, 493 residues long: Cytochrome P450 monooxygenase olcG (493 aa).

A helical membrane pass occupies residues 15–35; the sequence is GILATGALVIFVALFLATFQF. Cys429 contacts heme.

The protein belongs to the cytochrome P450 family. Requires heme as cofactor.

The protein localises to the membrane. The protein operates within secondary metabolite biosynthesis; terpenoid biosynthesis. Functionally, cytochrome P450 monooxygenase; part of the gene cluster that mediates the biosynthesis of 15-deoxyoxalicine B. The first step of the pathway is the synthesis of nicotinyl-CoA from nicotinic acid by the nicotinic acid-CoA ligase olcI. Nicotinyl-CoA is then a substrate of polyketide synthase olcA to produce 4-hydroxy-6-(3-pyridinyl)-2H-pyran-2-one (HPPO) which is further prenylated by the polyprenyl transferase olcH to yield geranylgeranyl-HPPO. Geranylgeranyl pyrophosphate is provided by the cluster-specific geranylgeranyl pyrophosphate synthase olcC. The FAD-dependent monooxygenase olcE catalyzes the epoxidation of geranylgeranyl-HPPO and the terpene cyclase olcD catalyzes the cyclization of the terpenoid component, resulting in the formation of the tricyclic terpene moiety seen in predecaturin E. The cytochrome P450 monooxygenase then catalyzes the allylic oxidation of predecaturin E, which is followed by spirocylization with concomitant loss of one molecule of water to form decaturin E. Decaturin E is the substrate of the cytochrome P450 monooxygenase olcJ which hydroxylates it at the C-29 position to form decaturin F. The short-chain dehydrogenase/reductase olcF may catalyze the oxidation of decaturin F to generate the 29-hydroxyl-27-one intermediate, and subsequent hemiacetal formation probably leads to the formation of decaturin C. The dioxygenase olcK may be a peroxisomal enzyme that catalyzes the hydroxylation of decaturin C into decaturin A once decaturin C is shuttled into the peroxisome by the MFS transporter olcL. Finally the cytochrome P450 monooxygenase olcB catalyzes the oxidative rearrangement to yield 15-deoxyoxalicine B. In the absence of olcJ, decaturin E may be shunted to a pathway in which it is oxidized to a ketone, possibly by olcF, to form decaturin D, which undergoes further allylic oxidation to yield decaturin G. Moreover, in the absence of oclK or oclL, oclB can convert decaturin C into 15-deoxyoxalicine A. The sequence is that of Cytochrome P450 monooxygenase olcG from Penicillium canescens.